Reading from the N-terminus, the 473-residue chain is Crt homolog 1 (473 aa).

Topologically, residues 1-49 (MTNNDKEKQPLLSSINNEDDNGATINIVEPVPWYSNIPQKIKNSMSKET) are cytoplasmic. The chain crosses the membrane as a helical span at residues 50 to 70 (ITILIYVVLYVTSGVINSVLL). Topologically, residues 71–80 (KKVMNKFTNY) are vacuolar. A helical membrane pass occupies residues 81-101 (AFFLSQLTNFGYVPIFGAVTA). Residues 102–121 (YKIFFTKDIPQETRDFPTRK) lie on the Cytoplasmic side of the membrane. A helical transmembrane segment spans residues 122 to 142 (FAIMGALDAITGFFVVIGGVS). At 143–146 (TSGP) the chain is on the vacuolar side. A helical transmembrane segment spans residues 147-167 (LQQLLNQAIIPFTMIASFIFL). The Cytoplasmic portion of the chain corresponds to 168-175 (KERYSLIQ). The chain crosses the membrane as a helical span at residues 176 to 196 (LGGALVIIGGVVTSLIPSLLG). Residues 197–207 (GSSGGNKPFWN) are Vacuolar-facing. Residues 208–228 (FFYLLSVIPGALSNVYKDIGF) traverse the membrane as a helical segment. Over 229–248 (QAVADMDVWYLQYWDSLYQS) the chain is Cytoplasmic. The chain crosses the membrane as a helical span at residues 249 to 269 (IFGLFLFPVNNWLPPPATVKF). Residues 270 to 322 (EQILPFMKEGAECLAGINSIIPSYINGTSSFTATSCTYAPDATITCDDCHNAW) are Vacuolar-facing. N295 carries N-linked (GlcNAc...) asparagine glycosylation. The helical transmembrane segment at 323 to 343 (IVIILYMTINIIYNIFILLVL) threads the bilayer. At 344–352 (KHAGATVYS) the chain is on the cytoplasmic side. The chain crosses the membrane as a helical span at residues 353-373 (IANTLRLPLTNIVFSIHFIMG). Position 374 (S374) is a topological domain, vacuolar. A helical transmembrane segment spans residues 375 to 395 (AVSPFSGLSVAGLVIILVGLG). At 396 to 473 (GYRVGSMIKQ…AANNNNYGDA (78 aa)) the chain is on the cytoplasmic side.

This sequence belongs to the CRT-like transporter family.

The protein resides in the vacuole membrane. Its function is as follows. Nutrient transporter. Involved in maintaining the osmotic homeostasis of the digestive vacuole. The sequence is that of Crt homolog 1 (crtp1) from Dictyostelium discoideum (Social amoeba).